Here is a 385-residue protein sequence, read N- to C-terminus: 8-amino-7-oxononanoate synthase (385 aa).

Arg21 serves as a coordination point for substrate. Residue 108 to 109 (GY) participates in pyridoxal 5'-phosphate binding. His133 lines the substrate pocket. 3 residues coordinate pyridoxal 5'-phosphate: Ser179, His207, and Thr233. Lys236 carries the post-translational modification N6-(pyridoxal phosphate)lysine. Thr350 is a binding site for substrate.

This sequence belongs to the class-II pyridoxal-phosphate-dependent aminotransferase family. BioF subfamily. In terms of assembly, homodimer. Pyridoxal 5'-phosphate serves as cofactor.

The enzyme catalyses 6-carboxyhexanoyl-[ACP] + L-alanine + H(+) = (8S)-8-amino-7-oxononanoate + holo-[ACP] + CO2. It functions in the pathway cofactor biosynthesis; biotin biosynthesis. Catalyzes the decarboxylative condensation of pimeloyl-[acyl-carrier protein] and L-alanine to produce 8-amino-7-oxononanoate (AON), [acyl-carrier protein], and carbon dioxide. This is 8-amino-7-oxononanoate synthase from Pectobacterium atrosepticum (strain SCRI 1043 / ATCC BAA-672) (Erwinia carotovora subsp. atroseptica).